Here is a 587-residue protein sequence, read N- to C-terminus: Pescadillo homolog (587 aa).

A coiled-coil region spans residues 267-306 (LKKKEEKNDEEGKNLSKKELNKAIKADQEQQENDEQDNNN). The tract at residues 290–311 (IKADQEQQENDEQDNNNGESVE) is disordered. Over residues 295-311 (EQQENDEQDNNNGESVE) the composition is skewed to acidic residues. Residues 335–434 (STAELFSKFI…ELINVNEYAA (100 aa)) enclose the BRCT domain. The disordered stretch occupies residues 437 to 587 (TLPPHLSPWG…KKKEQLKKLN (151 aa)). Residues 459-494 (KEDGEAEEDTDEEEEEVEIEDGDEDQEDEEEEEDED) are compositionally biased toward acidic residues. The stretch at 470 to 587 (EEEEEVEIED…KKKEQLKKLN (118 aa)) forms a coiled coil. 3 stretches are compositionally biased toward basic and acidic residues: residues 529-541 (SNKEADEEKELKK), 559-569 (IEKKENREKQL), and 578-587 (KKKEQLKKLN).

Belongs to the pescadillo family. Component of the NOP7 complex, composed of ERB1, NOP7 and YTM1. The complex is held together by ERB1, which interacts with NOP7 via its N-terminal domain and with YTM1 via a high-affinity interaction between the seven-bladed beta-propeller domains of the 2 proteins. The NOP7 complex associates with the 66S pre-ribosome.

The protein resides in the nucleus. The protein localises to the nucleolus. It is found in the nucleoplasm. Its function is as follows. Component of the NOP7 complex, which is required for maturation of the 25S and 5.8S ribosomal RNAs and formation of the 60S ribosome. Required for the transition from hyphal to yeast growth. This chain is Pescadillo homolog, found in Candida albicans (strain SC5314 / ATCC MYA-2876) (Yeast).